Here is a 571-residue protein sequence, read N- to C-terminus: Leucine aminopeptidase A2, chloroplastic (571 aa).

A chloroplast-targeting transit peptide spans 1 to 42 (MATLRVSSLFASSSSSLHSNPSVFTKYQSSPKWAFSFPVTPL). Residues K342 and D347 each contribute to the Mg(2+) site. K354 is an active-site residue. Residues D367, D427, and E429 each contribute to the Mg(2+) site. The active site involves R431.

Belongs to the peptidase M17 family. In terms of assembly, homohexamer (dimer of homotrimers). The cofactor is Mg(2+). As to expression, expressed during floral development. Expressed in healthy and senescent leaves, cotyledons (emergence from seed coats), pistils, sepals, petals, stamens, and floral buds (at protein level).

The protein resides in the plastid. It is found in the chloroplast. It carries out the reaction Release of an N-terminal amino acid, Xaa-|-Yaa-, in which Xaa is preferably Leu, but may be other amino acids including Pro although not Arg or Lys, and Yaa may be Pro. Amino acid amides and methyl esters are also readily hydrolyzed, but rates on arylamides are exceedingly low.. It catalyses the reaction Release of N-terminal proline from a peptide.. Catalyzes the removal of unsubstituted N-terminal amino acids from various peptides. When associated as homohexamer, catalyzes the proteolyzes of Xaa-Leu dipeptides. Possesses leucine aminopeptidase activity against the model substrate leucine-amido methyl coumarin. Presumably involved in the processing and regular turnover of intracellular proteins. Regulates wound signaling and has a role in insect defense. In terms of biological role, functions as a molecular chaperone to protect proteins from heat-induced damage. This is Leucine aminopeptidase A2, chloroplastic from Solanum lycopersicum (Tomato).